A 185-amino-acid polypeptide reads, in one-letter code: GTP-dependent dephospho-CoA kinase (185 aa).

GTP is bound by residues Asp50, Val52, Asp73, Lys75, and Glu128.

This sequence belongs to the GTP-dependent DPCK family.

The catalysed reaction is 3'-dephospho-CoA + GTP = GDP + CoA + H(+). Its pathway is cofactor biosynthesis; coenzyme A biosynthesis. Its function is as follows. Catalyzes the GTP-dependent phosphorylation of the 3'-hydroxyl group of dephosphocoenzyme A to form coenzyme A (CoA). The chain is GTP-dependent dephospho-CoA kinase from Aeropyrum pernix (strain ATCC 700893 / DSM 11879 / JCM 9820 / NBRC 100138 / K1).